The following is a 508-amino-acid chain: Photosystem II CP47 reaction center protein (508 aa).

Transmembrane regions (helical) follow at residues 21–36, 101–115, 140–156, 203–218, 237–252, and 457–472; these read SVHIMHTALVSGWAGS, IVFSGLCFLAAIWHW, GIHLFLAGVACFGFGAF, IAAGTLGILAGLFHLS, VLSSSIAAVFFAAFVV, and TFALLFFFGHIWHGAR.

It belongs to the PsbB/PsbC family. PsbB subfamily. In terms of assembly, PSII is composed of 1 copy each of membrane proteins PsbA, PsbB, PsbC, PsbD, PsbE, PsbF, PsbH, PsbI, PsbJ, PsbK, PsbL, PsbM, PsbT, PsbX, PsbY, PsbZ, Psb30/Ycf12, at least 3 peripheral proteins of the oxygen-evolving complex and a large number of cofactors. It forms dimeric complexes. Binds multiple chlorophylls. PSII binds additional chlorophylls, carotenoids and specific lipids. serves as cofactor.

Its subcellular location is the plastid. It localises to the chloroplast thylakoid membrane. In terms of biological role, one of the components of the core complex of photosystem II (PSII). It binds chlorophyll and helps catalyze the primary light-induced photochemical processes of PSII. PSII is a light-driven water:plastoquinone oxidoreductase, using light energy to abstract electrons from H(2)O, generating O(2) and a proton gradient subsequently used for ATP formation. The chain is Photosystem II CP47 reaction center protein from Oryza sativa subsp. indica (Rice).